The primary structure comprises 231 residues: MKLKTLAKATLALGLLTTGVITSEGQAVQAKEKQERVQHLYDIKDLHRYYSSESFEFSNISGKVENYNGSNVVRFNQENQNHQLFLLGKDKEKYKEGIEGKDVFVVKELIDPNGRLSTVGGVTKKNNKSSETNTHLFVNKVYGGNLDASIDSFSINKEEVSLKELDFKIRQHLVKNYGLYKGTTKYGKITINLKDGEKQEIDLGDKLQFERMGDVLNSKDINKIEVTLKQI.

A signal peptide spans 1 to 30 (MKLKTLAKATLALGLLTTGVITSEGQAVQA).

The protein belongs to the staphylococcal/streptococcal toxin family. Interacts with host IgA and complement C5; these interactions inhibits complement activation.

It is found in the secreted. In terms of biological role, plays a role in the inhibition of host complement-mediated lysis and serum bactericidal activity by interacting with complement component C5. Affects all three pathways of complement activation and inhibits the cleavage of C5 by preventing its binding to C5 convertases. In turn, prevents C5a-mediated neutrophil migration. This is Staphylococcal superantigen-like 7 from Staphylococcus aureus (strain NCTC 8325 / PS 47).